We begin with the raw amino-acid sequence, 150 residues long: UPF0756 membrane protein CGSHiEE_06715 (150 aa).

4 helical membrane-spanning segments follow: residues 1-21, 52-72, 81-101, and 123-143; these read MTLQ…LGVL, YGVK…LVSG, GFVS…AWLA, and IIGV…AGIL.

It belongs to the UPF0756 family.

It is found in the cell membrane. The protein is UPF0756 membrane protein CGSHiEE_06715 of Haemophilus influenzae (strain PittEE).